A 395-amino-acid chain; its full sequence is Acetate kinase (395 aa).

Position 10 (Asn10) interacts with Mg(2+). Lys17 contributes to the ATP binding site. Arg87 contacts substrate. Residue Asp144 is the Proton donor/acceptor of the active site. Residues 204-208 (HLGNG), 279-281 (DMR), and 327-331 (GIGEN) each bind ATP. Glu381 provides a ligand contact to Mg(2+).

It belongs to the acetokinase family. As to quaternary structure, homodimer. It depends on Mg(2+) as a cofactor. The cofactor is Mn(2+).

Its subcellular location is the cytoplasm. The catalysed reaction is acetate + ATP = acetyl phosphate + ADP. It functions in the pathway metabolic intermediate biosynthesis; acetyl-CoA biosynthesis; acetyl-CoA from acetate: step 1/2. Functionally, catalyzes the formation of acetyl phosphate from acetate and ATP. Can also catalyze the reverse reaction. This is Acetate kinase from Stutzerimonas stutzeri (strain A1501) (Pseudomonas stutzeri).